Reading from the N-terminus, the 465-residue chain is Cysteine--tRNA ligase (465 aa).

Position 30 (C30) interacts with Zn(2+). The short motif at M32 to H42 is the 'HIGH' region element. The Zn(2+) site is built by C214, H239, and E243. The 'KMSKS' region signature appears at K271–S275. K274 is a binding site for ATP.

The protein belongs to the class-I aminoacyl-tRNA synthetase family. Monomer. It depends on Zn(2+) as a cofactor.

The protein localises to the cytoplasm. It catalyses the reaction tRNA(Cys) + L-cysteine + ATP = L-cysteinyl-tRNA(Cys) + AMP + diphosphate. This chain is Cysteine--tRNA ligase, found in Ralstonia nicotianae (strain ATCC BAA-1114 / GMI1000) (Ralstonia solanacearum).